Reading from the N-terminus, the 338-residue chain is Nicotinate-nucleotide--dimethylbenzimidazole phosphoribosyltransferase (338 aa).

The Proton acceptor role is filled by Glu-305.

This sequence belongs to the CobT family.

It carries out the reaction 5,6-dimethylbenzimidazole + nicotinate beta-D-ribonucleotide = alpha-ribazole 5'-phosphate + nicotinate + H(+). It participates in nucleoside biosynthesis; alpha-ribazole biosynthesis; alpha-ribazole from 5,6-dimethylbenzimidazole: step 1/2. Catalyzes the synthesis of alpha-ribazole-5'-phosphate from nicotinate mononucleotide (NAMN) and 5,6-dimethylbenzimidazole (DMB). The polypeptide is Nicotinate-nucleotide--dimethylbenzimidazole phosphoribosyltransferase (Rhizobium meliloti (strain 1021) (Ensifer meliloti)).